Reading from the N-terminus, the 582-residue chain is Hemagglutinin-neuraminidase (582 aa).

Topologically, residues 1–34 (MEPSKLFTMSDNATFAPGPVINAADKKTFRTCFR) are intravirion. Residues 35–55 (ILVLSVQAVTLILVIVTLGEL) traverse the membrane as a helical; Signal-anchor for type II membrane protein segment. The Virion surface portion of the chain corresponds to 56–582 (VRMINDQGLS…LPVLTRLTIT (527 aa)). Asparagine 127 carries an N-linked (GlcNAc...) asparagine; by host glycan. 3 cysteine pairs are disulfide-bonded: cysteine 178-cysteine 202, cysteine 192-cysteine 253, and cysteine 244-cysteine 257. The involved in neuraminidase activity stretch occupies residues 240–245 (NRKSCS). Asparagine 284 and asparagine 329 each carry an N-linked (GlcNAc...) asparagine; by host glycan. 3 disulfide bridges follow: cysteine 350–cysteine 471, cysteine 382–cysteine 392, and cysteine 465–cysteine 475. 3 N-linked (GlcNAc...) asparagine; by host glycosylation sites follow: asparagine 400, asparagine 448, and asparagine 464. N-linked (GlcNAc...) asparagine; by host glycosylation is present at asparagine 507. Residues cysteine 545 and cysteine 556 are joined by a disulfide bond.

The protein belongs to the paramyxoviruses hemagglutinin-neuraminidase family. In terms of assembly, homotetramer; composed of disulfide-linked homodimers. Interacts with F protein trimer.

The protein localises to the virion membrane. Its subcellular location is the host cell membrane. The enzyme catalyses Hydrolysis of alpha-(2-&gt;3)-, alpha-(2-&gt;6)-, alpha-(2-&gt;8)- glycosidic linkages of terminal sialic acid residues in oligosaccharides, glycoproteins, glycolipids, colominic acid and synthetic substrates.. Its function is as follows. Attaches the virus to alpha-2,3-linked sialic acid-containing cell receptors and thereby initiating infection. Binding of HN protein to the receptor induces a conformational change that allows the F protein to trigger virion/cell membranes fusion. Binds to the glycan motifs sialyl Lewis (SLe) and GM2 ganglioside (GM2-glycan). In terms of biological role, neuraminidase (sialidase) activity ensures the efficient spread of the virus by dissociating the mature virions from the neuraminic acid containing glycoproteins. The polypeptide is Hemagglutinin-neuraminidase (HN) (Mumps virus genotype B (strain Miyahara vaccine) (MuV)).